Here is a 315-residue protein sequence, read N- to C-terminus: Olfactory receptor 52R1 (315 aa).

Over 1 to 28 (MVLASGNSSSHPVSFILLGIPGLESFQL) the chain is Extracellular. N-linked (GlcNAc...) asparagine glycosylation is present at Asn-7. The helical transmembrane segment at 29-49 (WIAFPFCATYAVAVVGNITLL) threads the bilayer. Topologically, residues 50–57 (HVIRIDHT) are cytoplasmic. Residues 58-78 (LHEPMYLFLAMLAITDLVLSS) traverse the membrane as a helical segment. The Extracellular segment spans residues 79–102 (STQPKMLAIFWFHAHEIQYHACLI). A disulfide bond links Cys-100 and Cys-192. Residues 103 to 123 (QVFFIHAFSSVESGVLMAMAL) traverse the membrane as a helical segment. The Cytoplasmic segment spans residues 124 to 142 (DCYVAICFPLRHSSILTPS). Residues 143–163 (VVIKLGTIVMLRGLLWVSPFC) traverse the membrane as a helical segment. Residues 164–199 (FMVSRMPFCQHQAIPQSYCEHMAVLKLVCADTSISR) lie on the Extracellular side of the membrane. Residues 200–220 (GNGLFVAFSVAGFDMIVIGMS) form a helical membrane-spanning segment. The Cytoplasmic segment spans residues 221-240 (YVMILRAVLQLPSGEARLKA). A helical transmembrane segment spans residues 241–261 (FSTRSSHICVILALYIPALFS). At 262–276 (FLTYRFGHDVPRVVH) the chain is on the extracellular side. Residues 277 to 297 (ILFANLYLLIPPMLNPIIYGV) form a helical membrane-spanning segment. At 298–315 (RTKQIGDRVIQGCCGNIP) the chain is on the cytoplasmic side.

Belongs to the G-protein coupled receptor 1 family.

The protein resides in the cell membrane. Its function is as follows. Odorant receptor. The chain is Olfactory receptor 52R1 (OR52R1) from Homo sapiens (Human).